The following is a 59-amino-acid chain: Large ribosomal subunit protein uL30 (59 aa).

Belongs to the universal ribosomal protein uL30 family. In terms of assembly, part of the 50S ribosomal subunit.

The chain is Large ribosomal subunit protein uL30 from Clostridium botulinum (strain 657 / Type Ba4).